The following is a 310-amino-acid chain: tRNA dimethylallyltransferase (310 aa).

9 to 16 (GPTAVGKT) contributes to the ATP binding site. 11–16 (TAVGKT) serves as a coordination point for substrate. The interaction with substrate tRNA stretch occupies residues 34–37 (DSMQ).

Belongs to the IPP transferase family. As to quaternary structure, monomer. Mg(2+) serves as cofactor.

The enzyme catalyses adenosine(37) in tRNA + dimethylallyl diphosphate = N(6)-dimethylallyladenosine(37) in tRNA + diphosphate. Catalyzes the transfer of a dimethylallyl group onto the adenine at position 37 in tRNAs that read codons beginning with uridine, leading to the formation of N6-(dimethylallyl)adenosine (i(6)A). This chain is tRNA dimethylallyltransferase, found in Syntrophomonas wolfei subsp. wolfei (strain DSM 2245B / Goettingen).